We begin with the raw amino-acid sequence, 185 residues long: Ribosome-recycling factor (185 aa).

The protein belongs to the RRF family.

It localises to the cytoplasm. Functionally, responsible for the release of ribosomes from messenger RNA at the termination of protein biosynthesis. May increase the efficiency of translation by recycling ribosomes from one round of translation to another. This chain is Ribosome-recycling factor, found in Halorhodospira halophila (strain DSM 244 / SL1) (Ectothiorhodospira halophila (strain DSM 244 / SL1)).